The primary structure comprises 686 residues: Translation initiation factor IF-2 (686 aa).

The disordered stretch occupies residues 54-105 (KPSVADEFEVEEKVVRSKKNSNKKKKKGKGNEDKRQENFAGRQQTQTVETPD). Positions 69 to 81 (RSKKNSNKKKKKG) are enriched in basic residues. The tr-type G domain occupies 188–357 (ERPAVVTIMG…LLVSEVEEYK (170 aa)). The segment at 197–204 (GHVDHGKT) is G1. Position 197-204 (197-204 (GHVDHGKT)) interacts with GTP. The segment at 222 to 226 (GITQH) is G2. The tract at residues 243–246 (DTPG) is G3. Residues 243 to 247 (DTPGH) and 297 to 300 (NKMD) contribute to the GTP site. Residues 297–300 (NKMD) form a G4 region. The segment at 333–335 (SAI) is G5.

It belongs to the TRAFAC class translation factor GTPase superfamily. Classic translation factor GTPase family. IF-2 subfamily.

It localises to the cytoplasm. One of the essential components for the initiation of protein synthesis. Protects formylmethionyl-tRNA from spontaneous hydrolysis and promotes its binding to the 30S ribosomal subunits. Also involved in the hydrolysis of GTP during the formation of the 70S ribosomal complex. The protein is Translation initiation factor IF-2 of Bacillus cereus (strain AH187).